Here is a 131-residue protein sequence, read N- to C-terminus: Large ribosomal subunit protein bL12 (131 aa).

The protein belongs to the bacterial ribosomal protein bL12 family. In terms of assembly, homodimer. Part of the ribosomal stalk of the 50S ribosomal subunit. Forms a multimeric L10(L12)X complex, where L10 forms an elongated spine to which 2 to 4 L12 dimers bind in a sequential fashion. Binds GTP-bound translation factors.

Functionally, forms part of the ribosomal stalk which helps the ribosome interact with GTP-bound translation factors. Is thus essential for accurate translation. This chain is Large ribosomal subunit protein bL12, found in Prochlorococcus marinus (strain NATL2A).